Consider the following 366-residue polypeptide: MAARQQQKGTGFGVQYEDFVPKSEWKDQPEATILNIDLTGFAKEQMKVTYVHSSKMIRVTGERPLANRKWNRFNEVFTVPQNCLVDKIHGSFKNNVLTITMPKETITKVAYLPETSRTEAAALEKAAKLEEKRLLEESRRKEKEEEEAKQMKKQLLEEKEALIRKLQEEAKAKEEAEMRKLQEEAKANEEAAAKKLQEEIEAKEKLEERKLEERRLEERKLEDMKLAEEAKLKKIQERKSVDESGEKEKILKPEVVYTKSGHVATPKPESGSGLKSGFGGVGEVVKLAEEKLGNLVEKEKKMGKGIMEKIRRKEITSEEKKLMMNVGVAALVIFALGAYVSYTFCSSSSSSSSSSPSSSSSSTKPE.

Residues 14–121 (VQYEDFVPKS…LPETSRTEAA (108 aa)) enclose the sHSP domain. Residues 129–133 (LEEKR) form an A-1 repeat. Positions 129 to 220 (LEEKRLLEES…LEERRLEERK (92 aa)) are 6 X 5 AA repeats A of L-E-E-[SKR]-[ERK]. An A-2 repeat occupies 135–139 (LEESR). Residues 156-160 (LEEKE) form an A-3 repeat. One copy of the B-1 repeat lies at 163–176 (IRKLQEEAKAKEEA). Residues 163–206 (IRKLQEEAKAKEEAEMRKLQEEAKANEEAAAKKLQEEIEAKEKL) form a 3 X 14 AA repeats B of [IMA]-[RK]-K-L-Q-E-E-A-K-A-K-E-[EK]-[LA] region. One copy of the B-2 repeat lies at 178–191 (MRKLQEEAKANEEA). A B-3 repeat occupies 193–205 (AKKLQEEIEAKEK). An A-4 repeat occupies 206–210 (LEERK). An A-5 repeat occupies 211–215 (LEERR). An A-6 repeat occupies 216-220 (LEERK). The helical transmembrane segment at 322 to 342 (LMMNVGVAALVIFALGAYVSY) threads the bilayer. Residues 345 to 366 (CSSSSSSSSSSPSSSSSSTKPE) form a disordered region. The span at 346–366 (SSSSSSSSSSPSSSSSSTKPE) shows a compositional bias: low complexity.

This sequence belongs to the small heat shock protein (HSP20) family.

Its subcellular location is the cell membrane. Seems to not be involved in heat resistance. Unable to mediate restriction of long-distance movement of the pathogenic tobacco etch virus (TEV) without causing a hypersensitive response or inducing systemic acquired resistance. This is Inactive protein RESTRICTED TEV MOVEMENT 2 (RTM2) from Arabidopsis thaliana (Mouse-ear cress).